The following is a 258-amino-acid chain: Acetylglutamate kinase (258 aa).

Substrate-binding positions include 44–45 (GG), Arg66, and Asn158. ATP is bound by residues 181-186 (DVSGIL) and 209-211 (IIT).

Belongs to the acetylglutamate kinase family. ArgB subfamily. As to quaternary structure, homodimer.

Its subcellular location is the cytoplasm. It catalyses the reaction N-acetyl-L-glutamate + ATP = N-acetyl-L-glutamyl 5-phosphate + ADP. It participates in amino-acid biosynthesis; L-arginine biosynthesis; N(2)-acetyl-L-ornithine from L-glutamate: step 2/4. Functionally, catalyzes the ATP-dependent phosphorylation of N-acetyl-L-glutamate. In Shigella sonnei (strain Ss046), this protein is Acetylglutamate kinase.